Here is a 230-residue protein sequence, read N- to C-terminus: Large ribosomal subunit protein uL1 (230 aa).

Belongs to the universal ribosomal protein uL1 family. In terms of assembly, part of the 50S ribosomal subunit.

Its function is as follows. Binds directly to 23S rRNA. The L1 stalk is quite mobile in the ribosome, and is involved in E site tRNA release. Protein L1 is also a translational repressor protein, it controls the translation of the L11 operon by binding to its mRNA. This chain is Large ribosomal subunit protein uL1, found in Acidithiobacillus ferrooxidans (strain ATCC 53993 / BNL-5-31) (Leptospirillum ferrooxidans (ATCC 53993)).